The primary structure comprises 433 residues: Elongation factor 1-alpha (433 aa).

Residues 5–227 (KPHLNLVVIG…AFDFFKEPPR (223 aa)) form the tr-type G domain. The G1 stretch occupies residues 14–21 (GHIDHGKS). Residue 14–21 (GHIDHGKS) participates in GTP binding. S21 lines the Mg(2+) pocket. Positions 70 to 74 (GITID) are G2. The segment at 91–94 (DAPG) is G3. GTP contacts are provided by residues 91 to 95 (DAPGH) and 153 to 156 (NKMD). The tract at residues 153–156 (NKMD) is G4. The segment at 192 to 194 (SAW) is G5.

The protein belongs to the TRAFAC class translation factor GTPase superfamily. Classic translation factor GTPase family. EF-Tu/EF-1A subfamily.

The protein localises to the cytoplasm. The catalysed reaction is GTP + H2O = GDP + phosphate + H(+). In terms of biological role, GTP hydrolase that promotes the GTP-dependent binding of aminoacyl-tRNA to the A-site of ribosomes during protein biosynthesis. This is Elongation factor 1-alpha from Thermofilum pendens (strain DSM 2475 / Hrk 5).